A 128-amino-acid chain; its full sequence is Small ribosomal subunit protein uS13 (128 aa).

Residues 98-128 (VRGQRTRTNARTRKGPRPRIGVKKKGKQAGS) form a disordered region. The span at 101–128 (QRTRTNARTRKGPRPRIGVKKKGKQAGS) shows a compositional bias: basic residues.

This sequence belongs to the universal ribosomal protein uS13 family. In terms of assembly, part of the 30S ribosomal subunit. Forms a loose heterodimer with protein S19. Forms two bridges to the 50S subunit in the 70S ribosome.

Located at the top of the head of the 30S subunit, it contacts several helices of the 16S rRNA. In the 70S ribosome it contacts the 23S rRNA (bridge B1a) and protein L5 of the 50S subunit (bridge B1b), connecting the 2 subunits; these bridges are implicated in subunit movement. Contacts the tRNAs in the A and P-sites. This Thermomicrobium roseum (strain ATCC 27502 / DSM 5159 / P-2) protein is Small ribosomal subunit protein uS13.